A 1464-amino-acid chain; its full sequence is Glutamate receptor ionotropic, NMDA 2A (1464 aa).

Positions 1–22 (MGRVGYWTLLVLPALLVWRGPA) are cleaved as a signal peptide. At 23-556 (PSAAAEKGPP…SAFLEPFSAS (534 aa)) the chain is on the extracellular side. Position 44 (histidine 44) interacts with Zn(2+). Asparagine 75 is a glycosylation site (N-linked (GlcNAc...) asparagine). An intrachain disulfide couples cysteine 87 to cysteine 320. Histidine 128, glutamate 266, and aspartate 282 together coordinate Zn(2+). 4 N-linked (GlcNAc...) asparagine glycosylation sites follow: asparagine 340, asparagine 380, asparagine 443, and asparagine 444. Cystine bridges form between cysteine 429–cysteine 455 and cysteine 436–cysteine 456. The L-glutamate site is built by serine 511, threonine 513, and arginine 518. An N-linked (GlcNAc...) asparagine glycan is attached at asparagine 541. A helical membrane pass occupies residues 557 to 576 (VWVMMFVMLLIVSAIAVFVF). Topologically, residues 577-600 (EYFSPVGYNRNLAKGKAPHGPSFT) are cytoplasmic. The segment at 599-620 (FTIGKAIWLLWGLVFNNSVPVQ) is pore-forming. The segment at residues 601-615 (IGKAIWLLWGLVFNN) is an intramembrane region (discontinuously helical). At 616–625 (SVPVQNPKGT) the chain is on the cytoplasmic side. Residues 626-646 (TSKIMVSVWAFFAVIFLASYT) form a helical membrane-spanning segment. The Extracellular portion of the chain corresponds to 647–814 (ANLAAFMIQE…NEVMSSQLDI (168 aa)). Asparagine 687 carries an N-linked (GlcNAc...) asparagine glycan. Residues serine 689, threonine 690, and aspartate 731 each coordinate L-glutamate. Cysteines 745 and 800 form a disulfide. The chain crosses the membrane as a helical span at residues 815 to 835 (DNMAGVFYMLAAAMALSLITF). Residues 836–1464 (IWEHLFYWKL…KKMPSIESDV (629 aa)) lie on the Cytoplasmic side of the membrane. Serine 882, serine 890, and serine 929 each carry phosphoserine. 2 stretches are compositionally biased toward polar residues: residues 1001-1010 (STESKVNSRP) and 1023-1032 (QDSLSQNPVS). Disordered regions lie at residues 1001 to 1088 (STES…NFKR) and 1148 to 1180 (PDPYQDPSENLRKGDSTLPMNRNPLQNEEGLSN). Serine 1025 is subject to Phosphoserine. Composition is skewed to basic and acidic residues over residues 1033–1043 (QRDEATAENRT) and 1052–1061 (LPEEMAHSDI). 2 positions are modified to phosphoserine: serine 1059 and serine 1062. A compositionally biased stretch (basic and acidic residues) spans 1070 to 1087 (CHREPDNSKNPKTKDNFK). Residues 1165–1180 (LPMNRNPLQNEEGLSN) show a composition bias toward polar residues. Serine 1198 and serine 1291 each carry phosphoserine. The segment at 1335–1372 (KLSGKKSSLFPQGLEDSKRSKSLLPDHTSDNPFLHSHR) is disordered. Positions 1462–1464 (SDV) match the PDZ-binding motif.

It belongs to the glutamate-gated ion channel (TC 1.A.10.1) family. NR2A/GRIN2A subfamily. As to quaternary structure, heterotetramer. Forms heterotetrameric channels composed of two GluN1/zeta subunits (GRIN1), and two identical GluN2/epsilon subunits (GRIN2A, GRIN2B, GRIN2C or GRIN2D) or GluN3 subunits (GRIN3A or GRIN3B) (in vitro). Can also form heterotetrameric channels that contain at least two GluN1 subunits and at least two different GluN2 subunits (or a combination of one GluN2 and one GluN3 subunits) (in vitro). In vivo, the subunit composition may depend on the expression levels of the different subunits. Found in a complex with GRIN1, GRIN3A and PPP2CB. Found in a complex with GRIN1 and GRIN3B. Interacts with AIP1. Interacts with HIP1 and NETO1. Interacts with SNX27 (via PDZ domain); the interaction is required for recycling to the plasma membrane when endocytosed and prevent degradation in lysosomes. Interacts with PDZ domains of PATJ and DLG4. Interacts with LRFN2. Interacts with RPH3A and DLG4; this ternary complex regulates NMDA receptor composition at postsynaptic membranes. Interacts with SORCS2. Interacts with ARC; preventing ARC oligomerization. Interacts (via the extreme C-terminus) with FRMPD2 (the second PDZ domain); the interaction is direct and is likely to promote NMDAR-mediated neural signal transmission. GRIN2A binds FRMPD2 with lower affinity than GRIN2B.

The protein localises to the cell projection. The protein resides in the dendritic spine. Its subcellular location is the cell membrane. It is found in the synapse. It localises to the postsynaptic cell membrane. The protein localises to the cytoplasmic vesicle membrane. The catalysed reaction is Ca(2+)(in) = Ca(2+)(out). The enzyme catalyses Na(+)(in) = Na(+)(out). It catalyses the reaction K(+)(in) = K(+)(out). Functionally, component of N-methyl-D-aspartate (NMDA) receptors (NMDARs) that function as heterotetrameric, ligand-gated cation channels with high calcium permeability and voltage-dependent block by Mg(2+). NMDARs participate in synaptic plasticity for learning and memory formation by contributing to the slow phase of excitatory postsynaptic current, long-term synaptic potentiation, and learning. Channel activation requires binding of the neurotransmitter L-glutamate to the GluN2 subunit, glycine or D-serine binding to the GluN1 subunit, plus membrane depolarization to eliminate channel inhibition by Mg(2+). NMDARs mediate simultaneously the potasium efflux and the influx of calcium and sodium. Each GluN2 subunit confers differential attributes to channel properties, including activation, deactivation and desensitization kinetics, pH sensitivity, Ca2(+) permeability, and binding to allosteric modulators. Participates in the synaptic plasticity regulation through activation by the L-glutamate releaseed by BEST1, into the synaptic cleft, upon F2R/PAR-1 activation in astrocyte. This Pan troglodytes (Chimpanzee) protein is Glutamate receptor ionotropic, NMDA 2A.